The sequence spans 498 residues: POU domain protein 2, isoform A (498 aa).

The span at 1–30 shows a compositional bias: low complexity; the sequence is MMVLQQQQQQRLWDATTTSNTNTQTQQSAN. A disordered region spans residues 1–35; the sequence is MMVLQQQQQQRLWDATTTSNTNTQTQQSANVESTP. Phosphoserine occurs at positions 72, 211, 215, 217, and 219. The interval 191–273 is disordered; that stretch reads QMKQQQREDP…STPKPTSGLT (83 aa). Low complexity predominate over residues 207-222; the sequence is PLAKSPLRSPSLSPVP. Polar residues predominate over residues 228–251; the sequence is QQRTPPNSMTANSLGMSSAVMTPN. Residues 252-270 are compositionally biased toward low complexity; sequence TPSMQQQPQLQQSTPKPTS. Residues 286 to 360 enclose the POU-specific domain; it reads EETTDLEELE…LLQKWLEDAD (75 aa). A DNA-binding region (homeobox) is located at residues 391 to 450; it reads RRKKRTSIETTVRTTLEKAFLMNCKPTSEEISQLSERLNMDKEVIRVWFCNRRQKEKRIN.

It belongs to the POU transcription factor family. Class-2 subfamily. Initial expression in cellular blastoderm stage, then in ectodermal stripes during germband extension. Broad expression in the neuroectoderm followed by limitation to discrete subsets of CNS cells, and expression in specific PNS neurons and support cells.

It localises to the nucleus. Functionally, DNA-binding regulatory protein implicated in early development. Involved in neuronal cell fate decision. May act as an octamer-dependent activator of transcription. Could also play an early role in specific ectodermal cells, and a subsequent role in the embryonic nervous system. This is POU domain protein 2, isoform A (pdm2) from Drosophila melanogaster (Fruit fly).